The sequence spans 337 residues: Biotin synthase (337 aa).

A Radical SAM core domain is found at 62–289 (NAVQLSTLIS…KAMVRLSAGR (228 aa)). [4Fe-4S] cluster contacts are provided by cysteine 77, cysteine 81, and cysteine 84. Residues cysteine 121, cysteine 152, cysteine 212, and arginine 284 each contribute to the [2Fe-2S] cluster site.

It belongs to the radical SAM superfamily. Biotin synthase family. In terms of assembly, homodimer. Requires [4Fe-4S] cluster as cofactor. [2Fe-2S] cluster is required as a cofactor.

It catalyses the reaction (4R,5S)-dethiobiotin + (sulfur carrier)-SH + 2 reduced [2Fe-2S]-[ferredoxin] + 2 S-adenosyl-L-methionine = (sulfur carrier)-H + biotin + 2 5'-deoxyadenosine + 2 L-methionine + 2 oxidized [2Fe-2S]-[ferredoxin]. Its pathway is cofactor biosynthesis; biotin biosynthesis; biotin from 7,8-diaminononanoate: step 2/2. Catalyzes the conversion of dethiobiotin (DTB) to biotin by the insertion of a sulfur atom into dethiobiotin via a radical-based mechanism. The chain is Biotin synthase from Nitrosomonas europaea (strain ATCC 19718 / CIP 103999 / KCTC 2705 / NBRC 14298).